Here is a 217-residue protein sequence, read N- to C-terminus: 3-dehydroquinate dehydratase (217 aa).

Residues 26–28 (EFR) and Arg-59 each bind 3-dehydroquinate. His-114 acts as the Proton donor/acceptor in catalysis. Catalysis depends on Lys-140, which acts as the Schiff-base intermediate with substrate. Residues Arg-178 and Gln-201 each contribute to the 3-dehydroquinate site.

It belongs to the type-I 3-dehydroquinase family. Homodimer.

The enzyme catalyses 3-dehydroquinate = 3-dehydroshikimate + H2O. It functions in the pathway metabolic intermediate biosynthesis; chorismate biosynthesis; chorismate from D-erythrose 4-phosphate and phosphoenolpyruvate: step 3/7. Functionally, involved in the third step of the chorismate pathway, which leads to the biosynthesis of aromatic amino acids. Catalyzes the cis-dehydration of 3-dehydroquinate (DHQ) and introduces the first double bond of the aromatic ring to yield 3-dehydroshikimate. This Hydrogenobaculum sp. (strain Y04AAS1) protein is 3-dehydroquinate dehydratase.